The sequence spans 141 residues: Nucleoside triphosphatase NudI (141 aa).

The Nudix hydrolase domain occupies 1–141 (MRQRTIVCPL…RHTLRLKGLL (141 aa)). Residues 38-59 (GGVEPGERIEEALRREIREELG) carry the Nudix box motif.

Belongs to the Nudix hydrolase family. NudI subfamily. As to quaternary structure, monomer. Requires Mg(2+) as cofactor.

The catalysed reaction is a ribonucleoside 5'-triphosphate + H2O = a ribonucleoside 5'-phosphate + diphosphate + H(+). It carries out the reaction a 2'-deoxyribonucleoside 5'-triphosphate + H2O = a 2'-deoxyribonucleoside 5'-phosphate + diphosphate + H(+). The enzyme catalyses dUTP + H2O = dUMP + diphosphate + H(+). It catalyses the reaction dTTP + H2O = dTMP + diphosphate + H(+). The catalysed reaction is dCTP + H2O = dCMP + diphosphate + H(+). Catalyzes the hydrolysis of nucleoside triphosphates, with a preference for pyrimidine deoxynucleoside triphosphates (dUTP, dTTP and dCTP). This is Nucleoside triphosphatase NudI from Salmonella arizonae (strain ATCC BAA-731 / CDC346-86 / RSK2980).